The primary structure comprises 610 residues: UvrABC system protein C (610 aa).

A GIY-YIG domain is found at asparagine 16 to valine 94. The UVR domain maps to serine 204 to valine 239.

This sequence belongs to the UvrC family. Interacts with UvrB in an incision complex.

It localises to the cytoplasm. Its function is as follows. The UvrABC repair system catalyzes the recognition and processing of DNA lesions. UvrC both incises the 5' and 3' sides of the lesion. The N-terminal half is responsible for the 3' incision and the C-terminal half is responsible for the 5' incision. The sequence is that of UvrABC system protein C from Edwardsiella ictaluri (strain 93-146).